The sequence spans 212 residues: Troponin I, cardiac muscle (212 aa).

Residues 1-11 show a composition bias toward polar residues; the sequence is MADRSGGSTAG. The segment at 1–45 is disordered; that stretch reads MADRSGGSTAGDTVPAPPPVRRRSSANYRAYATEPHAKKKSKISA. Ala-2 is subject to N-acetylalanine. Ser-5 carries the post-translational modification Phosphoserine. Phosphoserine; by PKA and PKD/PRKD1 is present on residues Ser-24 and Ser-25. A Phosphotyrosine modification is found at Tyr-28. A Phosphothreonine; by STK4/MST1 modification is found at Thr-33. An involved in binding TNC region spans residues 34-81; the sequence is EPHAKKKSKISASRKLQLKTLMLQIAKQELEREAEERRGEKGRALSTR. Residues Ser-44 and Ser-46 each carry the phosphoserine; by PKC/PRKCE modification. Position 53 is a phosphothreonine; by STK4/MST1 (Thr-53). At Ser-79 the chain carries Phosphoserine. At Thr-80 the chain carries Phosphothreonine. The involved in binding TNC and actin stretch occupies residues 131–151; that stretch reads NQKIFDLRGKFKRPTLRRVRI. Thr-145 bears the Phosphothreonine; by STK4/MST1 mark. Ser-152 bears the Phosphoserine; by PAK3 mark. Thr-183 is modified (phosphothreonine). At Ser-201 the chain carries Phosphoserine.

This sequence belongs to the troponin I family. As to quaternary structure, interacts with TRIM63. Binds to actin and tropomyosin. Interacts with STK4/MST1. Post-translationally, phosphorylated at Ser-24 and Ser-25 by PRKD1; phosphorylation reduces myofilament calcium sensitivity. Phosphorylated preferentially at Thr-33. Phosphorylation by STK4/MST1 alters its binding affinity to TNNC1 (cardiac Tn-C) and TNNT2 (cardiac Tn-T). Phosphorylated at Ser-44 and Ser-46 by PRKCE; phosphorylation increases myocardium contractile dysfunction.

Functionally, troponin I is the inhibitory subunit of troponin, the thin filament regulatory complex which confers calcium-sensitivity to striated muscle actomyosin ATPase activity. The polypeptide is Troponin I, cardiac muscle (TNNI3) (Bos taurus (Bovine)).